Consider the following 201-residue polypeptide: Recombination protein RecR (201 aa).

A C4-type zinc finger spans residues 60–75 (CSRCFHFTDAEECSIC). Positions 83-178 (GEICVVETTA…RVSRIAYGIP (96 aa)) constitute a Toprim domain.

The protein belongs to the RecR family.

May play a role in DNA repair. It seems to be involved in an RecBC-independent recombinational process of DNA repair. It may act with RecF and RecO. The sequence is that of Recombination protein RecR from Syntrophobacter fumaroxidans (strain DSM 10017 / MPOB).